Reading from the N-terminus, the 147-residue chain is Insertion element IS402 uncharacterized 16.2 kDa protein (147 aa).

Residues 106-147 (DSSSIRAVGAGQKLGQTPPIARDPVPSTTSSPTPTVRRSPRS) are disordered. The span at 129–147 (PVPSTTSSPTPTVRRSPRS) shows a compositional bias: low complexity.

The protein belongs to the transposase 6 family.

The polypeptide is Insertion element IS402 uncharacterized 16.2 kDa protein (Burkholderia cepacia (Pseudomonas cepacia)).